Here is a 919-residue protein sequence, read N- to C-terminus: Translocase of chloroplast 101, chloroplastic (919 aa).

2 disordered regions span residues 20–47 (SASRSLSEEVGVDPALVSEGAPEGVIEG) and 64–211 (VDDE…NETR). Basic and acidic residues predominate over residues 73–88 (SENKAVVETEKVESKP). Acidic residues predominate over residues 96–128 (FAEEDGDSDADAEDEDDEDDEDDDEDDDDEDDK). Polar residues predominate over residues 182–207 (QRPNGAPSTQLTATTEENANSDTAEG). One can recognise an AIG1-type G domain in the interval 284-513 (DFACTILVLG…KLQETATPGR (230 aa)). The tract at residues 293–300 (GKTGVGKS) is G1. A GTP-binding site is contributed by 296-301 (GVGKSA). Ser300 contributes to the Mg(2+) binding site. The segment at 319 to 323 (PSTNK) is G2. A G3 region spans residues 340 to 343 (DTPG). Positions 412 to 415 (THAS) are G4. GTP contacts are provided by residues His413 and 461–462 (EN). Residues 461 to 463 (ENH) form a G5 region. 2 disordered regions span residues 540–585 (LPDE…LTKE) and 611–650 (RRRKEMKKRQAQMSKEELAQPDEADDEAGQPAAVPVPMPD). The segment covering 543–567 (EQLDESDESDDDEEEEDSEADDYDE) has biased composition (acidic residues). Residues 574–585 (LSKEELEELTKE) are compositionally biased toward basic and acidic residues. Over residues 629–638 (AQPDEADDEA) the composition is skewed to acidic residues. Positions 641–650 (PAAVPVPMPD) are enriched in low complexity. The helical transmembrane segment at 893-914 (MVLIGIVPILRSLINCRFGFGG) threads the bilayer.

This sequence belongs to the TRAFAC class TrmE-Era-EngA-EngB-Septin-like GTPase superfamily. AIG1/Toc34/Toc159-like paraseptin GTPase family. TOC159 subfamily. In terms of assembly, part of the TOC core complex. The cofactor is Mg(2+).

It localises to the plastid. The protein resides in the chloroplast outer membrane. Its function is as follows. GTPase involved in protein precursor import into chloroplasts. Seems to recognize chloroplast-destined precursor proteins and regulate their presentation to the translocation channel through GTP hydrolysis. Probably specialized in the import of nuclear encoded non-photosynthetic preproteins from the cytoplasm to the chloroplast. The protein is Translocase of chloroplast 101, chloroplastic of Physcomitrium patens (Spreading-leaved earth moss).